Reading from the N-terminus, the 260-residue chain is Carbonic anhydrase 2 (260 aa).

Ser-2 carries the N-acetylserine modification. Ser-2 bears the Phosphoserine mark. Residues 3 to 259 form the Alpha-carbonic anhydrase domain; sequence HHWGYSKHNG…LKNRKIKASF (257 aa). His-64 acts as the Proton acceptor in catalysis. The active site involves Asn-67. The residue at position 87 (Ser-87) is a Phosphoserine. Positions 94, 96, and 119 each coordinate Zn(2+). Tyr-127 is an active-site residue. Ser-165 bears the Phosphoserine mark. 198–199 contacts substrate; sequence TT.

Belongs to the alpha-carbonic anhydrase family. As to quaternary structure, interacts with SLC4A4. Interaction with SLC4A7 regulates SLC4A7 transporter activity. Interacts with SLC26A6. Zn(2+) serves as cofactor.

It is found in the cytoplasm. The protein localises to the cell membrane. The catalysed reaction is hydrogencarbonate + H(+) = CO2 + H2O. It catalyses the reaction urea = cyanamide + H2O. With respect to regulation, inhibited by acetazolamide. Its function is as follows. Catalyzes the reversible hydration of carbon dioxide. Can also hydrate cyanamide to urea. Involved in the regulation of fluid secretion into the anterior chamber of the eye. Essential for bone resorption and osteoclast differentiation. Contributes to intracellular pH regulation in the duodenal upper villous epithelium during proton-coupled peptide absorption. Stimulates the chloride-bicarbonate exchange activity of SLC26A6. This chain is Carbonic anhydrase 2 (Ca2), found in Mus musculus (Mouse).